Reading from the N-terminus, the 729-residue chain is Fatty acid oxidation complex subunit alpha (729 aa).

The tract at residues 1–189 (MLYKGDTLYL…KIGLVDGVVK (189 aa)) is enoyl-CoA hydratase/isomerase. Position 296 (Asp-296) interacts with substrate. The tract at residues 311-729 (ETPKQAAVLG…ARPVGDLKTA (419 aa)) is 3-hydroxyacyl-CoA dehydrogenase. NAD(+)-binding positions include Met-324, Asp-343, 400-402 (VVE), Lys-407, and Ser-429. His-450 serves as the catalytic For 3-hydroxyacyl-CoA dehydrogenase activity. Asn-453 provides a ligand contact to NAD(+). Substrate-binding residues include Asn-500 and Tyr-660. Residues 708–729 (RHNEPYYPPVEPARPVGDLKTA) form a disordered region.

In the N-terminal section; belongs to the enoyl-CoA hydratase/isomerase family. The protein in the C-terminal section; belongs to the 3-hydroxyacyl-CoA dehydrogenase family. In terms of assembly, heterotetramer of two alpha chains (FadB) and two beta chains (FadA).

The catalysed reaction is a (3S)-3-hydroxyacyl-CoA + NAD(+) = a 3-oxoacyl-CoA + NADH + H(+). The enzyme catalyses a (3S)-3-hydroxyacyl-CoA = a (2E)-enoyl-CoA + H2O. It catalyses the reaction a 4-saturated-(3S)-3-hydroxyacyl-CoA = a (3E)-enoyl-CoA + H2O. It carries out the reaction (3S)-3-hydroxybutanoyl-CoA = (3R)-3-hydroxybutanoyl-CoA. The catalysed reaction is a (3Z)-enoyl-CoA = a 4-saturated (2E)-enoyl-CoA. The enzyme catalyses a (3E)-enoyl-CoA = a 4-saturated (2E)-enoyl-CoA. It participates in lipid metabolism; fatty acid beta-oxidation. Functionally, involved in the aerobic and anaerobic degradation of long-chain fatty acids via beta-oxidation cycle. Catalyzes the formation of 3-oxoacyl-CoA from enoyl-CoA via L-3-hydroxyacyl-CoA. It can also use D-3-hydroxyacyl-CoA and cis-3-enoyl-CoA as substrate. The protein is Fatty acid oxidation complex subunit alpha of Escherichia coli O17:K52:H18 (strain UMN026 / ExPEC).